The following is a 245-amino-acid chain: 1-(5-phosphoribosyl)-5-[(5-phosphoribosylamino)methylideneamino] imidazole-4-carboxamide isomerase (245 aa).

Residue D7 is the Proton acceptor of the active site. The active-site Proton donor is D129.

The protein belongs to the HisA/HisF family.

The protein resides in the cytoplasm. The enzyme catalyses 1-(5-phospho-beta-D-ribosyl)-5-[(5-phospho-beta-D-ribosylamino)methylideneamino]imidazole-4-carboxamide = 5-[(5-phospho-1-deoxy-D-ribulos-1-ylimino)methylamino]-1-(5-phospho-beta-D-ribosyl)imidazole-4-carboxamide. Its pathway is amino-acid biosynthesis; L-histidine biosynthesis; L-histidine from 5-phospho-alpha-D-ribose 1-diphosphate: step 4/9. The sequence is that of 1-(5-phosphoribosyl)-5-[(5-phosphoribosylamino)methylideneamino] imidazole-4-carboxamide isomerase from Psychromonas ingrahamii (strain DSM 17664 / CCUG 51855 / 37).